The following is a 346-amino-acid chain: E3 ubiquitin-protein ligase ARK2C (346 aa).

Disordered stretches follow at residues 23 to 76 (PFQR…QHSG) and 267 to 288 (PHKY…GEES). The ubiquitin binding stretch occupies residues 266–268 (FPH). Positions 275–284 (PQDGKGKKDE) are enriched in basic and acidic residues. Zn(2+)-binding residues include Cys-294 and Cys-297. Residues 294–335 (CTICLSMLEDGEDVRRLPCMHLFHQLCVDQWLAMSKKCPICR) form an RING-type; atypical zinc finger. Residues 309 to 313 (RLPCM) form a ubiquitin binding region. Zn(2+) is bound by residues His-317 and Cys-320.

The protein belongs to the Arkadia family. In terms of assembly, monomer; binding to the ubiquitin-conjugating enzyme E2 does not trigger homodimerization.

The protein resides in the nucleus. The enzyme catalyses S-ubiquitinyl-[E2 ubiquitin-conjugating enzyme]-L-cysteine + [acceptor protein]-L-lysine = [E2 ubiquitin-conjugating enzyme]-L-cysteine + N(6)-ubiquitinyl-[acceptor protein]-L-lysine.. With respect to regulation, binds free ubiquitin non-covalently via its RING-type zinc finger. Ubiquitin-binding leads to enhance the E3 ubiquitin-protein ligase activity by stabilizing the ubiquitin-conjugating enzyme E2 (donor ubiquitin) in the 'closed' conformation and activating ubiquitin transfer. Functionally, E3 ubiquitin-protein ligase that acts as a regulator of motor axon elongation. Required for efficient motor axon extension in the dorsal forelimb by enhancing the transcriptional responses of the SMAD1/SMAD5/SMAD8 effectors, which are activated downstream of BMP. Acts by mediating ubiquitination and degradation of SMAD inhibitors such as SMAD6, SMAD7, SKI and SNON isoform of SKIL. The protein is E3 ubiquitin-protein ligase ARK2C of Homo sapiens (Human).